Consider the following 119-residue polypeptide: Small ribosomal subunit protein uS13 (119 aa).

Positions 94-113 (GLPVRGQRTKTNARTRKGPR) are enriched in basic residues. Positions 94–119 (GLPVRGQRTKTNARTRKGPRKAIGAK) are disordered.

It belongs to the universal ribosomal protein uS13 family. Part of the 30S ribosomal subunit. Forms a loose heterodimer with protein S19. Forms two bridges to the 50S subunit in the 70S ribosome.

Its function is as follows. Located at the top of the head of the 30S subunit, it contacts several helices of the 16S rRNA. In the 70S ribosome it contacts the 23S rRNA (bridge B1a) and protein L5 of the 50S subunit (bridge B1b), connecting the 2 subunits; these bridges are implicated in subunit movement. Contacts the tRNAs in the A and P-sites. The sequence is that of Small ribosomal subunit protein uS13 from Nitrosomonas europaea (strain ATCC 19718 / CIP 103999 / KCTC 2705 / NBRC 14298).